A 207-amino-acid chain; its full sequence is Cytochrome c biogenesis ATP-binding export protein CcmA (207 aa).

An ABC transporter domain is found at 4–207 (LEVRELLCER…RISLTQTRAV (204 aa)). ATP is bound at residue 36-43 (GSNGAGKT).

It belongs to the ABC transporter superfamily. CcmA exporter (TC 3.A.1.107) family. As to quaternary structure, the complex is composed of two ATP-binding proteins (CcmA) and two transmembrane proteins (CcmB).

Its subcellular location is the cell inner membrane. The catalysed reaction is heme b(in) + ATP + H2O = heme b(out) + ADP + phosphate + H(+). Its function is as follows. Part of the ABC transporter complex CcmAB involved in the biogenesis of c-type cytochromes; once thought to export heme, this seems not to be the case, but its exact role is uncertain. Responsible for energy coupling to the transport system. The protein is Cytochrome c biogenesis ATP-binding export protein CcmA of Escherichia coli O157:H7.